A 333-amino-acid chain; its full sequence is Porphobilinogen deaminase (333 aa).

An S-(dipyrrolylmethanemethyl)cysteine modification is found at Cys255.

It belongs to the HMBS family. As to quaternary structure, monomer. Dipyrromethane is required as a cofactor.

It catalyses the reaction 4 porphobilinogen + H2O = hydroxymethylbilane + 4 NH4(+). It participates in porphyrin-containing compound metabolism; protoporphyrin-IX biosynthesis; coproporphyrinogen-III from 5-aminolevulinate: step 2/4. In terms of biological role, tetrapolymerization of the monopyrrole PBG into the hydroxymethylbilane pre-uroporphyrinogen in several discrete steps. The chain is Porphobilinogen deaminase from Burkholderia vietnamiensis (strain G4 / LMG 22486) (Burkholderia cepacia (strain R1808)).